Reading from the N-terminus, the 72-residue chain is Penaeidin-2a (72 aa).

The first 21 residues, 1 to 21 (MRLVVCLVFLASFALVCQGEA), serve as a signal peptide directing secretion. 3 disulfide bridges follow: Cys-45–Cys-59, Cys-48–Cys-66, and Cys-60–Cys-67. At Lys-71 the chain carries Lysine amide.

As to expression, higher expression in hemocytes and to a lesser extent in heart, testis, gills, intestine, lymphoid organ and hepatopancreas. Traces in eyes and subcuticular epithelium. Not present in the brain.

It is found in the cytoplasmic granule. Functionally, antibacterial activity against M.luteus and E.coli bacteria. Antifungal activity against N.crassa and F.oxysporum. Presents chitin-binding activity. The sequence is that of Penaeidin-2a from Penaeus vannamei (Whiteleg shrimp).